We begin with the raw amino-acid sequence, 213 residues long: 3,4-dihydroxy-2-butanone 4-phosphate synthase (213 aa).

D-ribulose 5-phosphate contacts are provided by residues 37-38 (RE), Asp-42, 150-154 (RSGHT), and Glu-174. Glu-38 is a Mg(2+) binding site. Residue His-153 participates in Mg(2+) binding.

Belongs to the DHBP synthase family. As to quaternary structure, homodimer. It depends on Mg(2+) as a cofactor. Requires Mn(2+) as cofactor.

It catalyses the reaction D-ribulose 5-phosphate = (2S)-2-hydroxy-3-oxobutyl phosphate + formate + H(+). The protein operates within cofactor biosynthesis; riboflavin biosynthesis; 2-hydroxy-3-oxobutyl phosphate from D-ribulose 5-phosphate: step 1/1. In terms of biological role, catalyzes the conversion of D-ribulose 5-phosphate to formate and 3,4-dihydroxy-2-butanone 4-phosphate. The polypeptide is 3,4-dihydroxy-2-butanone 4-phosphate synthase (Blochmanniella floridana).